The primary structure comprises 945 residues: Xylosyltransferase 1 (945 aa).

At 1–17 (MQAAPCARRLARRSHSA) the chain is on the cytoplasmic side. A helical; Signal-anchor for type II membrane protein transmembrane segment spans residues 18–38 (LLAALTVLLLQTLVVWNFSSL). Over 39-945 (DSGAGERRGG…GAVKPDGRLR (907 aa)) the chain is Lumenal. Residues 42–245 (AGERRGGAAV…KYDQPPKCDI (204 aa)) are disordered. Residues 76–103 (RGGGGGGGGCGGGGRGPQARARGGGPGE) are compositionally biased toward gly residues. The segment covering 131-147 (KVRTDSNNENSVPKDFE) has biased composition (basic and acidic residues). Over residues 149-158 (VDNSNFAPRT) the composition is skewed to polar residues. A compositionally biased stretch (basic and acidic residues) spans 163 to 190 (HQPELAKKPPSRQKELLKRKLEQQEKGK). Asparagine 212 carries N-linked (GlcNAc...) asparagine glycosylation. The span at 235 to 245 (TKYDQPPKCDI) shows a compositional bias: basic and acidic residues. Intrachain disulfides connect cysteine 243-cysteine 271, cysteine 287-cysteine 528, cysteine 547-cysteine 560, and cysteine 549-cysteine 558. UDP-alpha-D-xylose contacts are provided by residues valine 319, aspartate 347, and 376–378 (TIW). Residue asparagine 407 is glycosylated (N-linked (GlcNAc...) asparagine). Residue 480–481 (DW) coordinates UDP-alpha-D-xylose. Residues serine 561 and 584–585 (RK) contribute to the UDP-alpha-D-xylose site. 2 cysteine pairs are disulfide-bonded: cysteine 661–cysteine 913 and cysteine 906–cysteine 919. Residue asparagine 763 is glycosylated (N-linked (GlcNAc...) asparagine). The disordered stretch occupies residues 926 to 945 (SFSPDPKSELGAVKPDGRLR).

The protein belongs to the glycosyltransferase 14 family. XylT subfamily. As to quaternary structure, monomer. Requires a divalent metal cation as cofactor. Post-translationally, contains 7 disulfide bonds. In terms of processing, N-glycosylated.

It localises to the golgi apparatus membrane. It carries out the reaction UDP-alpha-D-xylose + L-seryl-[protein] = 3-O-(beta-D-xylosyl)-L-seryl-[protein] + UDP + H(+). It functions in the pathway glycan metabolism; chondroitin sulfate biosynthesis. It participates in glycan metabolism; heparan sulfate biosynthesis. Catalyzes the first step in the biosynthesis of chondroitin sulfate and dermatan sulfate proteoglycans, such as DCN. Transfers D-xylose from UDP-D-xylose to specific serine residues of the core protein. Required for normal maturation of chondrocytes during bone development, normal onset of ossification and normal embryonic and postnatal skeleton development, especially of the long bones. This chain is Xylosyltransferase 1 (XYLT1), found in Pan troglodytes (Chimpanzee).